The following is a 1802-amino-acid chain: Non-reducing polyketide synthase nscA (1802 aa).

The interval D27–H261 is N-terminal acylcarrier protein transacylase domain (SAT). The Ketosynthase family 3 (KS3) domain maps to S396–D829. Catalysis depends on for beta-ketoacyl synthase activity residues C569, H704, and H747. The segment at F935–R1235 is malonyl-CoA:ACP transacylase (MAT) domain. The segment at T1322–P1641 is product template (PT) domain. The N-terminal hotdog fold stretch occupies residues H1326–A1462. Residues H1326–D1636 enclose the PKS/mFAS DH domain. Catalysis depends on H1358, which acts as the Proton acceptor; for dehydratase activity. A C-terminal hotdog fold region spans residues A1490 to D1636. The Proton donor; for dehydratase activity role is filled by D1547. The disordered stretch occupies residues L1699–S1729. Residues T1702 to P1713 are compositionally biased toward low complexity. The Carrier domain occupies P1725–C1802. An O-(pantetheine 4'-phosphoryl)serine modification is found at S1762.

Requires pantetheine 4'-phosphate as cofactor.

The protein operates within secondary metabolite biosynthesis. Its function is as follows. Non-reducing polyketide synthase; part of the gene cluster that mediates the biosynthesis of neosartoricin B, a prenylated anthracenone that probably exhibits T-cell antiproliferative activity, suggestive of a physiological role as an immunosuppressive agent. The non-reducing polyketide synthase nscA probably synthesizes and cyclizes the decaketide backbone. The hydrolase nscB then mediates the product release through hydrolysis followed by spontaneous decarboxylation. The prenyltransferase nscD catalyzes the addition of the dimethylallyl group to the aromatic C5. The FAD-dependent monooxygenase nscC is then responsible for the stereospecific hydroxylation at C2. Neosartoricin B can be converted into two additional compounds neosartoricins C and D. Neosartoricin C is a spirocyclic compound that is cyclized through the attack of C3 hydroxyl on C14, followed by dehydration. On the other hand, neosartoricin D is a further cyclized compound in which attack of C2 on C14 in neosartoricin C results in the formation of the acetal-containing dioxabicyclo-octanone ring. Both of these compounds are novel and possibly represent related metabolites of the gene cluster. In Trichophyton tonsurans (strain CBS 112818) (Scalp ringworm fungus), this protein is Non-reducing polyketide synthase nscA.